The following is a 273-amino-acid chain: 4-hydroxy-tetrahydrodipicolinate reductase (273 aa).

NAD(+)-binding positions include 11-16, 102-104, and 126-129; these read GALGRM, GTT, and SPNF. The active-site Proton donor/acceptor is the His159. His160 is a (S)-2,3,4,5-tetrahydrodipicolinate binding site. Lys163 acts as the Proton donor in catalysis. (S)-2,3,4,5-tetrahydrodipicolinate is bound at residue 169–170; sequence GT.

Belongs to the DapB family. Homotetramer.

The protein localises to the cytoplasm. It carries out the reaction (S)-2,3,4,5-tetrahydrodipicolinate + NAD(+) + H2O = (2S,4S)-4-hydroxy-2,3,4,5-tetrahydrodipicolinate + NADH + H(+). The enzyme catalyses (S)-2,3,4,5-tetrahydrodipicolinate + NADP(+) + H2O = (2S,4S)-4-hydroxy-2,3,4,5-tetrahydrodipicolinate + NADPH + H(+). It functions in the pathway amino-acid biosynthesis; L-lysine biosynthesis via DAP pathway; (S)-tetrahydrodipicolinate from L-aspartate: step 4/4. In terms of biological role, catalyzes the conversion of 4-hydroxy-tetrahydrodipicolinate (HTPA) to tetrahydrodipicolinate. In Buchnera aphidicola subsp. Cinara cedri (strain Cc), this protein is 4-hydroxy-tetrahydrodipicolinate reductase.